The sequence spans 2623 residues: Probable polyketide synthase 31 (2623 aa).

Over residues 1–11 the composition is skewed to low complexity; the sequence is MTQNIDNNNNK. The disordered stretch occupies residues 1–25; sequence MTQNIDNNNNKLIRDRNDDDDVDRN. Residues 27-461 enclose the Ketosynthase family 3 (KS3) domain; the sequence is DGDVAVIGIG…GSNVCLILSE (435 aa). Catalysis depends on for beta-ketoacyl synthase activity residues cysteine 199, histidine 338, and histidine 384. The acyl/malonyl transferase stretch occupies residues 666-699; sequence GVSADIIIGHSLGEVSSPYCSGMIDFQTLCYLIY. Serine 676 (for acyl/malonyl transferase activity) is an active-site residue. The interval 959–1088 is N-terminal hotdog fold; the sequence is HEKIKSEGPS…GNFNLTKHNS (130 aa). Residues 959–1267 enclose the PKS/mFAS DH domain; that stretch reads HEKIKSEGPS…CALVSLGSNP (309 aa). Histidine 1000 serves as the catalytic Proton acceptor; for dehydratase activity. A C-terminal hotdog fold region spans residues 1105-1267; it reads NFTSISKQDF…CALVSLGSNP (163 aa). Residue aspartate 1177 is the Proton donor; for dehydratase activity of the active site. In terms of domain architecture, Carrier spans 2524-2601; it reads ANNEIIHSTI…QSIEIIKSAK (78 aa). Serine 2561 carries the O-(pantetheine 4'-phosphoryl)serine modification. Residues 2600–2623 form a disordered region; the sequence is AKNNNKNNNNNNNKNNSNNKNKNN. Residues 2601-2623 show a composition bias toward low complexity; it reads KNNNKNNNNNNNKNNSNNKNKNN.

It depends on pantetheine 4'-phosphate as a cofactor.

Its function is as follows. Probable polyketide synthase. In Dictyostelium discoideum (Social amoeba), this protein is Probable polyketide synthase 31 (pks31).